The sequence spans 653 residues: Laccase ustL (653 aa).

Positions 1–20 (MTSLTGLALLLCVLASQSWA) are cleaved as a signal peptide. 2 Plastocyanin-like domains span residues 31–143 (WEKG…RPKR) and 173–362 (VLSD…ATQV). Residues asparagine 74, asparagine 220, asparagine 235, asparagine 255, asparagine 277, asparagine 405, asparagine 463, and asparagine 479 are each glycosylated (N-linked (GlcNAc...) asparagine). In terms of domain architecture, Plastocyanin-like 3 spans 463 to 594 (NQTVGTEDEK…GGMSIALLDG (132 aa)). Cu cation contacts are provided by histidine 501, histidine 504, histidine 506, histidine 576, cysteine 577, histidine 578, and histidine 582. N-linked (GlcNAc...) asparagine glycosylation is present at asparagine 623.

The protein belongs to the multicopper oxidase family.

It catalyses the reaction 4 norrubrofusarin + O2 = 2 ustilaginoidin A + 2 H2O. It participates in secondary metabolite biosynthesis. Functionally, laccase; part of the gene cluster that mediates the biosynthesis of ustilaginoidins, dimeric gamma-naphthopyrones isolated from different fungal species. The first step in the biosynthesis of ustilaginoidins is the production of gamma-naphthopyrone precursor YWA1 by the non-reducing polyketide synthase ustP, via condensation of one acetyl-CoA starter unit with 6 malonyl-CoA units. YWA1 is then probably substrate of the ustZ to yield norrubrofusarin via a dehydration reaction. A key enzyme in the biosynthetic pathway is the laccase ustL, which catalyzes the oxidative dimerization of norrubrofusarin to ustilaginoidin A. It can produce the M- and P-atropisomers in varying amounts, depending on the reaction conditions. For the biosynthesis of 3-methylustilaginoid in derivatives such as chaetochromin A, a methylated derivative of YWA1 is required. The C-methylation is considered to be catalyzed by ustM, the phosphopantetheine attachment site of which indicates that it acts on the growing polyketide chain before release of the product. For the biosynthesis of chaetochromin A, it is assumed that saturation of the D2 double bond takes place before dimerization, and is probably catalyzed by an external reductase because no candidate gene was identified within the cluster. This chain is Laccase ustL, found in Ustilaginoidea virens (Rice false smut fungus).